The chain runs to 330 residues: Aspartate--ammonia ligase (330 aa).

The protein belongs to the class-II aminoacyl-tRNA synthetase family. AsnA subfamily.

The protein localises to the cytoplasm. The catalysed reaction is L-aspartate + NH4(+) + ATP = L-asparagine + AMP + diphosphate + H(+). The protein operates within amino-acid biosynthesis; L-asparagine biosynthesis; L-asparagine from L-aspartate (ammonia route): step 1/1. The protein is Aspartate--ammonia ligase of Escherichia coli O17:K52:H18 (strain UMN026 / ExPEC).